The chain runs to 21 residues: 40 kDa major outer membrane protein (21 aa).

Disulfide bond interactions within and between MOMP molecules and other components form high molecular-weight oligomers.

Its subcellular location is the cell outer membrane. In terms of biological role, structural rigidity of the outer membrane of elementary bodies and porin forming, permitting diffusion of solutes through the intracellular reticulate body membrane. This Actinobacillus pleuropneumoniae (Haemophilus pleuropneumoniae) protein is 40 kDa major outer membrane protein.